Reading from the N-terminus, the 250-residue chain is Galectin-3 (250 aa).

The tract at residues 1–60 (MADNFSLHDALSGSGNPNPQGWPGAWGNQPAGAGGYPGASYPGAYPGQAPPGAYPGQAPP) is disordered. Alanine 2 carries the post-translational modification N-acetylalanine. 2 positions are modified to phosphoserine: serine 6 and serine 12. Tandem repeats lie at residues 36-44 (YPGASYPGA), 45-53 (YPGQAPPGA), and 54-62 (YPGQAPPGA). Residues 36–109 (YPGASYPGAY…AYPATGPYGA (74 aa)) are 8 X 9 AA tandem repeats of Y-P-G-X(3)-P-G-A. Over residues 38–47 (GASYPGAYPG) the composition is skewed to low complexity. A compositionally biased stretch (pro residues) spans 48 to 60 (QAPPGAYPGQAPP). The stretch at 63 to 69 (YPGAPGA) is one 4; approximate repeat. The stretch at 70–78 (YPGAPAPGV) is repeat 5. The 6; approximate repeat unit spans residues 79–88 (YPGPPSGPGA). One copy of the 7; approximate repeat lies at 89–100 (YPSSGQPSATGA). The 8; approximate repeat unit spans residues 101 to 109 (YPATGPYGA). The Galectin domain occupies 118 to 248 (YNLPLPGGVV…DIDLTSASYT (131 aa)). 181–187 (WGREERQ) contributes to the a beta-D-galactoside binding site. Serine 188 carries the post-translational modification Phosphoserine. The Nuclear export signal motif lies at 226–241 (KKLNEISKLGISGDID).

Probably forms homo- or heterodimers. Interacts with DMBT1. Interacts with CD6 and ALCAM. Forms a complex with the ITGA3, ITGB1 and CSPG4. Interacts with LGALS3BP, LYPD3, ZFTRAF1 and UACA. Interacts with TRIM16; this interaction mediates autophagy of damage endomembranes. Interacts with cargo receptor TMED10; the interaction mediates the translocation from the cytoplasm into the ERGIC (endoplasmic reticulum-Golgi intermediate compartment) and thereby secretion. As to expression, a major expression is found in the colonic epithelium. It is also abundant in the activated macrophages. Expressed in fetal membranes.

The protein localises to the cytoplasm. Its subcellular location is the nucleus. The protein resides in the secreted. Galactose-specific lectin which binds IgE. May mediate with the alpha-3, beta-1 integrin the stimulation by CSPG4 of endothelial cells migration. Together with DMBT1, required for terminal differentiation of columnar epithelial cells during early embryogenesis. In the nucleus: acts as a pre-mRNA splicing factor. Involved in acute inflammatory responses including neutrophil activation and adhesion, chemoattraction of monocytes macrophages, opsonization of apoptotic neutrophils, and activation of mast cells. Together with TRIM16, coordinates the recognition of membrane damage with mobilization of the core autophagy regulators ATG16L1 and BECN1 in response to damaged endomembranes. The polypeptide is Galectin-3 (Homo sapiens (Human)).